Consider the following 505-residue polypeptide: MFS efflux pump atnC (505 aa).

The next 12 helical transmembrane spans lie at 48-68 (VLQV…GLTV), 117-137 (LIGW…IPYG), 148-168 (VLLL…LVCW), 181-201 (LFQC…ATIA), 216-236 (LQAT…VLMA), 240-260 (WTPC…LIAL), 304-324 (VAGL…LDFL), 343-363 (LSLR…LLLF), 377-399 (LLIA…LSPT), 403-425 (AILV…ASLW), 439-459 (TVAI…SLMY), and 469-489 (WVGL…GVLL).

It belongs to the major facilitator superfamily.

The protein resides in the membrane. Its pathway is secondary metabolite biosynthesis. Functionally, MFS efflux pump; part of the gene cluster that mediates the biosynthesis of aspercryptins, linear lipopeptides built from six amino acids including 2 highly unusual and nonproteogenic amino acids, 2-amino-octanoic acid (2aoa) and 2-amino-dodecanol (2adol). The sequence is that of MFS efflux pump atnC from Emericella nidulans (strain FGSC A4 / ATCC 38163 / CBS 112.46 / NRRL 194 / M139) (Aspergillus nidulans).